We begin with the raw amino-acid sequence, 411 residues long: Tyrosine--tRNA ligase (411 aa).

Tyr-34 is an L-tyrosine binding site. Residues 39–48 (CTATSLHIGS) carry the 'HIGH' region motif. Residues Tyr-171 and Gln-175 each contribute to the L-tyrosine site. A 'KMSKS' region motif is present at residues 231 to 235 (KMGKT). Residue Lys-234 coordinates ATP. Residues 345 to 411 (ISAYELFYEA…GKKRHILVRV (67 aa)) form the S4 RNA-binding domain.

It belongs to the class-I aminoacyl-tRNA synthetase family. TyrS type 1 subfamily. Homodimer.

The protein localises to the cytoplasm. It carries out the reaction tRNA(Tyr) + L-tyrosine + ATP = L-tyrosyl-tRNA(Tyr) + AMP + diphosphate + H(+). Catalyzes the attachment of tyrosine to tRNA(Tyr) in a two-step reaction: tyrosine is first activated by ATP to form Tyr-AMP and then transferred to the acceptor end of tRNA(Tyr). The polypeptide is Tyrosine--tRNA ligase (Rickettsia rickettsii (strain Sheila Smith)).